Consider the following 180-residue polypeptide: ATP-dependent protease subunit HslV (180 aa).

T6 is an active-site residue. 3 residues coordinate Na(+): A164, C167, and T170.

This sequence belongs to the peptidase T1B family. HslV subfamily. In terms of assembly, a double ring-shaped homohexamer of HslV is capped on each side by a ring-shaped HslU homohexamer. The assembly of the HslU/HslV complex is dependent on binding of ATP.

Its subcellular location is the cytoplasm. It carries out the reaction ATP-dependent cleavage of peptide bonds with broad specificity.. With respect to regulation, allosterically activated by HslU binding. Its function is as follows. Protease subunit of a proteasome-like degradation complex believed to be a general protein degrading machinery. This Borrelia duttonii (strain Ly) protein is ATP-dependent protease subunit HslV.